The sequence spans 419 residues: Metacaspase-1 (419 aa).

A disordered region spans residues 1–109 (MSGYPGYNNG…PPQGMHAFGQ (109 aa)). Composition is skewed to pro residues over residues 18-37 (QYPP…PPPQ) and 45-61 (QPPP…PPPQ). Residues 83 to 95 (SVNSNAYTNGNQN) show a composition bias toward polar residues. Catalysis depends on residues His210 and Cys266.

This sequence belongs to the peptidase C14B family.

In terms of biological role, involved in cell death (apoptosis). This chain is Metacaspase-1 (casA), found in Botryotinia fuckeliana (strain B05.10) (Noble rot fungus).